A 465-amino-acid polypeptide reads, in one-letter code: MFLATLYFALPLLDLLLSAEVSGGDRLDCVKASDQCLKEQSCSTKYRTLRQCVAGKETNFSLASGLEAKDECRSAMEALKQKSLYNCRCKRGMKKEKNCLRIYWSMYQSLQGNDLLEDSPYEPVNSRLSDIFRVVPFISDVFQQVEHIPKGNNCLDAAKACNLDDICKKYRSAYITPCTTSVSNDVCNRRKCHKALRQFFDKVPAKHSYGMLFCSCRDIACTERRRQTIVPVCSYEEREKPNCLNLQDSCKTNYICRSRLADFFTNCQPESRSVSSCLKENYADCLLAYSGLIGTVMTPNYIDSSSLSVAPWCDCSNSGNDLEECLKFLNFFKDNTCLKNAIQAFGNGSDVTVWQPAFPVQTTTATTTTALRVKNKPLGPAGSENEIPTHVLPPCANLQAQKLKSNVSGNTHLCISNGNYEKEGLGASSHITTKSMAAPPSCGLSPLLVLVVTALSTLLSLTETS.

The N-terminal stretch at M1–G24 is a signal peptide. 3 consecutive repeat copies span residues D25 to N113, K150 to R238, and E239 to I342. A disulfide bond links C36 and C42. N-linked (GlcNAc...) asparagine glycosylation occurs at N59. Disulfide bonds link C154–C214, C161–C167, C178–C192, C187–C233, C216–C221, C243–C313, C250–C256, C267–C285, C277–C337, and C315–C325. N-linked (GlcNAc...) asparagine glycans are attached at residues N347 and N406. A lipid anchor (GPI-anchor amidated serine) is attached at S429. The propeptide at H430–S465 is removed in mature form.

Belongs to the GDNFR family. In terms of assembly, interacts with GDNF ligand and RET: forms a 2:2:2 ternary complex composed of GDNF ligand, GFRA1 and RET receptor. Interacts with SORL1, either alone or in complex with GDNF. Interaction between SORL1 and GFRA1 leads to GFRA1 internalization, but not degradation.

It localises to the cell membrane. The protein localises to the golgi apparatus. Its subcellular location is the trans-Golgi network. The protein resides in the endosome. It is found in the multivesicular body. Coreceptor for GDNF, a neurotrophic factor that enhances survival and morphological differentiation of dopaminergic neurons and increases their high-affinity dopamine uptake. GDNF-binding leads to autophosphorylation and activation of the RET receptor. The sequence is that of GDNF family receptor alpha-1 (GFRA1) from Homo sapiens (Human).